A 783-amino-acid chain; its full sequence is Tricorn protease-interacting factor F2 (783 aa).

Residues Glu107 and 236 to 240 (GAMEN) contribute to the substrate site. His271 provides a ligand contact to Zn(2+). Glu272 (proton acceptor) is an active-site residue. Zn(2+) is bound by residues His275 and Glu294.

Belongs to the peptidase M1 family. In terms of assembly, monomer. Part of the Tricorn proteolytic complex. It depends on Zn(2+) as a cofactor.

The protein resides in the cytoplasm. Its function is as follows. Proteases F1, F2 and F3 degrade oligopeptides produced by Tricorn (themselves probably produced by the proteasome), yielding free amino acids. This Thermoplasma volcanium (strain ATCC 51530 / DSM 4299 / JCM 9571 / NBRC 15438 / GSS1) protein is Tricorn protease-interacting factor F2 (trf2).